A 371-amino-acid chain; its full sequence is Glycosyltransferase 8 domain-containing protein 1 (371 aa).

Topologically, residues 1-7 (MSFRKVN) are cytoplasmic. A helical; Signal-anchor for type II membrane protein transmembrane segment spans residues 8–28 (IVILVLAVALFLLVLHHNFLG). Over 29–371 (LSSLLRNEVS…RRHVEISNTK (343 aa)) the chain is Lumenal. 2 N-linked (GlcNAc...) asparagine glycosylation sites follow: Asn-103 and Asn-257.

Belongs to the glycosyltransferase 8 family.

The protein resides in the membrane. The polypeptide is Glycosyltransferase 8 domain-containing protein 1 (GLT8D1) (Bos taurus (Bovine)).